The sequence spans 350 residues: Serine/arginine-rich splicing factor RS40 (350 aa).

2 RRM domains span residues 2–74 and 97–168; these read KPVF…WTKS and KTLF…YAVK. Composition is skewed to basic and acidic residues over residues 73–82 and 167–187; these read KSERGGDKRS and VKDD…DRSP. Disordered stretches follow at residues 73–94 and 167–350; these read KSER…SSMR and VKDD…PADE. Phosphoserine occurs at positions 193, 195, and 211. Basic and acidic residues-rich tracts occupy residues 216–227 and 240–255; these read YRKERTSPDYGR and GSPE…DSPR. 7 positions are modified to phosphoserine: Ser-241, Ser-262, Ser-278, Ser-298, Ser-308, Ser-335, and Ser-340. Basic and acidic residues predominate over residues 272 to 289; that stretch reads NKRERMSPNHSPFKKESP. The span at 299–308 shows a compositional bias: basic and acidic residues; the sequence is PIERRERSRS.

This sequence belongs to the splicing factor SR family. RS subfamily. In terms of assembly, component of the spliceosome. Interacts with SNRNP35. Interacts with CYP59. Interacts with RCF3 and CPL1. Interacts with DRB1/HYL1 and SE. In terms of tissue distribution, highly expressed in roots and flowers. A presumably longer alternatively spliced form is found in leaves, stems and flowers.

It localises to the nucleus. The protein localises to the nucleus speckle. Functionally, required for constitutive and alternative pre-mRNA splicing. Involved in primary miRNA processing and pri-miRNA biogenesis. Binds both intronless and intron-containing pri-miRNAs. In Arabidopsis thaliana (Mouse-ear cress), this protein is Serine/arginine-rich splicing factor RS40 (RS40).